Consider the following 330-residue polypeptide: Phosphate acyltransferase (330 aa).

The protein belongs to the PlsX family. Homodimer. Probably interacts with PlsY.

Its subcellular location is the cytoplasm. It carries out the reaction a fatty acyl-[ACP] + phosphate = an acyl phosphate + holo-[ACP]. It functions in the pathway lipid metabolism; phospholipid metabolism. Catalyzes the reversible formation of acyl-phosphate (acyl-PO(4)) from acyl-[acyl-carrier-protein] (acyl-ACP). This enzyme utilizes acyl-ACP as fatty acyl donor, but not acyl-CoA. The sequence is that of Phosphate acyltransferase from Streptococcus pneumoniae (strain JJA).